Here is a 637-residue protein sequence, read N- to C-terminus: Serine/threonine protein kinase ypkA (637 aa).

Low complexity predominate over residues 20 to 29 (TFTRSSSTST). Disordered stretches follow at residues 20–63 (TFTR…SLVS) and 104–140 (SSSV…INAA). Positions 40 to 61 (VVSQTPSISSTNSNGINASESL) are enriched in polar residues. The span at 104 to 116 (SSSVRPSSSSSHS) shows a compositional bias: low complexity. Residues 117 to 136 (THGQTASFAQSGRPQSTSGG) are compositionally biased toward polar residues. The 258-residue stretch at 294–551 (FDLLKVVGKG…AAEIKSHHFF (258 aa)) folds into the Protein kinase domain. ATP-binding positions include 300-308 (VGKGSFGKV) and Lys-323. Asp-417 acts as the Proton acceptor in catalysis. The AGC-kinase C-terminal domain occupies 552-623 (ANIDWRKLLQ…NRPVAGLGDA (72 aa)). Phosphoserine is present on residues Ser-593 and Ser-612. Tyr-613 is modified (phosphotyrosine).

Belongs to the protein kinase superfamily. Ser/Thr protein kinase family. In terms of assembly, interacts with the sakA MAP kinase.

It catalyses the reaction L-seryl-[protein] + ATP = O-phospho-L-seryl-[protein] + ADP + H(+). The catalysed reaction is L-threonyl-[protein] + ATP = O-phospho-L-threonyl-[protein] + ADP + H(+). Serine/threonine protein kinase required for vegetative growth and conidiation. Important for fungal survival through the regulation of glycosphingolipid (GSL) biosynthesis and cross talks with MAP kinase pathways such as the cell wall integrity (CWI) and the high osmolarity glycerol (HOG) pathways. The polypeptide is Serine/threonine protein kinase ypkA (Aspergillus fumigatus (strain ATCC MYA-4609 / CBS 101355 / FGSC A1100 / Af293) (Neosartorya fumigata)).